The primary structure comprises 67 residues: Mu-conotoxin TsIIIA (67 aa).

An N-terminal signal peptide occupies residues 1–20 (MMSKLGVLLTICLLLFPLTA). Residues 21–48 (VPLDGDQPADQPAERKQNEQHPLFDQKR) constitute a propeptide that is removed on maturation. 3 disulfide bridges follow: C50–C59, C51–C64, and C55–C65.

Belongs to the conotoxin M superfamily. Expressed by the venom duct.

The protein localises to the secreted. Functionally, mu-conotoxins block voltage-gated sodium channels (Nav). This toxin specifically inhibits mammalian Nav1.8/SCN10A sodium currents (IC(50)=2.11 uM) without inducing a shift in the current-voltage relationship of this channel. In vivo, shows potent analgesic activity in a mice hotplate analgesic assay. In addition, this toxin has better analgesic effects than Ziconotide, an analgesic drug. The polypeptide is Mu-conotoxin TsIIIA (Conus tessulatus (Tessellate cone)).